The sequence spans 176 residues: NAD(P)H-quinone oxidoreductase subunit 6, chloroplastic (176 aa).

Helical transmembrane passes span phenylalanine 10–threonine 30, proline 32–leucine 52, alanine 61–methionine 81, leucine 92–isoleucine 112, and phenylalanine 152–alanine 172.

The protein belongs to the complex I subunit 6 family. As to quaternary structure, NDH is composed of at least 16 different subunits, 5 of which are encoded in the nucleus.

The protein localises to the plastid. It is found in the chloroplast thylakoid membrane. It catalyses the reaction a plastoquinone + NADH + (n+1) H(+)(in) = a plastoquinol + NAD(+) + n H(+)(out). The catalysed reaction is a plastoquinone + NADPH + (n+1) H(+)(in) = a plastoquinol + NADP(+) + n H(+)(out). Its function is as follows. NDH shuttles electrons from NAD(P)H:plastoquinone, via FMN and iron-sulfur (Fe-S) centers, to quinones in the photosynthetic chain and possibly in a chloroplast respiratory chain. The immediate electron acceptor for the enzyme in this species is believed to be plastoquinone. Couples the redox reaction to proton translocation, and thus conserves the redox energy in a proton gradient. In Pelargonium hortorum (Common geranium), this protein is NAD(P)H-quinone oxidoreductase subunit 6, chloroplastic (ndhG).